The sequence spans 137 residues: Small ribosomal subunit protein uS11 (137 aa).

Positions Glu116 to Leu137 are disordered. Residues Lys128 to Leu137 are compositionally biased toward basic residues.

Belongs to the universal ribosomal protein uS11 family.

In Kluyveromyces lactis (strain ATCC 8585 / CBS 2359 / DSM 70799 / NBRC 1267 / NRRL Y-1140 / WM37) (Yeast), this protein is Small ribosomal subunit protein uS11 (RPS14).